The primary structure comprises 434 residues: D-amino acid dehydrogenase (434 aa).

3 to 17 (VVILGSGVVGVASAW) contacts FAD.

Belongs to the DadA oxidoreductase family. Requires FAD as cofactor.

The enzyme catalyses a D-alpha-amino acid + A + H2O = a 2-oxocarboxylate + AH2 + NH4(+). It participates in amino-acid degradation; D-alanine degradation; NH(3) and pyruvate from D-alanine: step 1/1. In terms of biological role, oxidative deamination of D-amino acids. This is D-amino acid dehydrogenase from Serratia proteamaculans (strain 568).